Consider the following 715-residue polypeptide: Scinderin (715 aa).

The actin-severing stretch occupies residues 1–363 (MAQGLYHEEF…DGFGKVYVTE (363 aa)). A Gelsolin-like 1 repeat occupies 27 to 77 (LELVPVPESAYGNFYVGDAYLVLHTTQASRGFTYRLHFWLGKECTQDESTA). Residue Y102 is modified to Phosphotyrosine. A 1,2-diacyl-sn-glycero-3-phospho-(1D-myo-inositol-4,5-bisphosphate)-binding positions include 112-119 (KGGLKYKA) and 138-146 (RLLHVKGRR). Gelsolin-like repeat units follow at residues 148–188 (VRAT…YERL), 265–307 (LVAE…QERK), 398–451 (VQIW…DELT), and 523–564 (TRIM…EEEK). The segment at 364–715 (KVAHVKQIPF…WFLGWDSSRW (352 aa)) is actin-binding, Ca-sensitive. The tract at residues 364 to 715 (KVAHVKQIPF…WFLGWDSSRW (352 aa)) is ca(2+)-dependent actin binding. Ca(2+) contacts are provided by N538, D539, and E562. Residue Y599 is modified to Phosphotyrosine. Residues 626-668 (FIIEEVPGEFTQDDLAEDDVMLLDAWEQIFIWIGKDANEVEKS) form a Gelsolin-like 6 repeat. Ca(2+) contacts are provided by D643, D644, and E666.

This sequence belongs to the villin/gelsolin family. The N-terminus is blocked. In terms of tissue distribution, in the adrenal gland, expressed in the medulla but, in the cortex, found only in diffuse parts.

It localises to the cytoplasm. The protein localises to the cytoskeleton. It is found in the cell projection. Its subcellular location is the podosome. In terms of biological role, ca(2+)-dependent actin filament-severing protein that has a regulatory function in exocytosis by affecting the organization of the microfilament network underneath the plasma membrane. In vitro, also has barbed end capping and nucleating activities in the presence of Ca(2+). Severing activity is inhibited by phosphatidylinositol 4,5-bis-phosphate (PIP2). Required for megakaryocyte differentiation, maturation, polyploidization and apoptosis with the release of platelet-like particles. Plays a role in osteoclastogenesis (OCG) and actin cytoskeletal organization in osteoclasts. Regulates chondrocyte proliferation and differentiation. Inhibits cell proliferation and tumorigenesis. Signaling is mediated by MAPK, p38 and JNK pathways. The chain is Scinderin from Bos taurus (Bovine).